Reading from the N-terminus, the 384-residue chain is 1-deoxy-D-xylulose 5-phosphate reductoisomerase (384 aa).

Positions 10, 11, 12, 13, 37, and 124 each coordinate NADPH. K125 is a 1-deoxy-D-xylulose 5-phosphate binding site. E126 lines the NADPH pocket. D150 contacts Mn(2+). The 1-deoxy-D-xylulose 5-phosphate site is built by S151, E152, S176, and H199. E152 lines the Mn(2+) pocket. Residue G205 participates in NADPH binding. 1-deoxy-D-xylulose 5-phosphate-binding residues include S212, N217, K218, and E221. Residue E221 coordinates Mn(2+).

The protein belongs to the DXR family. Requires Mg(2+) as cofactor. It depends on Mn(2+) as a cofactor.

It catalyses the reaction 2-C-methyl-D-erythritol 4-phosphate + NADP(+) = 1-deoxy-D-xylulose 5-phosphate + NADPH + H(+). It functions in the pathway isoprenoid biosynthesis; isopentenyl diphosphate biosynthesis via DXP pathway; isopentenyl diphosphate from 1-deoxy-D-xylulose 5-phosphate: step 1/6. Its function is as follows. Catalyzes the NADPH-dependent rearrangement and reduction of 1-deoxy-D-xylulose-5-phosphate (DXP) to 2-C-methyl-D-erythritol 4-phosphate (MEP). In Clostridium tetani (strain Massachusetts / E88), this protein is 1-deoxy-D-xylulose 5-phosphate reductoisomerase.